The primary structure comprises 684 residues: UvrABC system protein C (684 aa).

The GIY-YIG domain maps to 16-95 (TDPGVYKFRD…IKRFDPRFNV (80 aa)). In terms of domain architecture, UVR spans 208–243 (APVRKRVTQRMEEAAENLEFELAARLRDDLGAIDKL). Positions 332–352 (EAAEDAKLERRGVDQESHAEP) are enriched in basic and acidic residues. A disordered region spans residues 332-357 (EAAEDAKLERRGVDQESHAEPRQGNA).

The protein belongs to the UvrC family. Interacts with UvrB in an incision complex.

The protein resides in the cytoplasm. Its function is as follows. The UvrABC repair system catalyzes the recognition and processing of DNA lesions. UvrC both incises the 5' and 3' sides of the lesion. The N-terminal half is responsible for the 3' incision and the C-terminal half is responsible for the 5' incision. The chain is UvrABC system protein C from Corynebacterium aurimucosum (strain ATCC 700975 / DSM 44827 / CIP 107346 / CN-1) (Corynebacterium nigricans).